We begin with the raw amino-acid sequence, 289 residues long: Iodotyrosine deiodinase 1 (289 aa).

The helical transmembrane segment at 1–21 (MYFLTPILVAILCILVVWIFK) threads the bilayer. Residues 29-58 (KKKGEPRTRAEARPWVDEDLKDSSDLHQAE) show a composition bias toward basic and acidic residues. A disordered region spans residues 29–69 (KKKGEPRTRAEARPWVDEDLKDSSDLHQAEEDADEWQESEE). Over residues 59–69 (EDADEWQESEE) the composition is skewed to acidic residues. FMN contacts are provided by residues 100–104 (RRSVR), Ser-128, and 128–129 (SG). Positions 130, 157, 161, and 182 each coordinate 3-iodo-L-tyrosine. Residues 237–239 (TTT) and Arg-279 contribute to the FMN site.

It belongs to the nitroreductase family. Homodimer. It depends on FMN as a cofactor. In terms of tissue distribution, expressed at a high level in thyroid gland (at protein level). Expressed at a high level in thyroid gland and at lower level in kidney and trachea.

The protein localises to the cell membrane. The protein resides in the cytoplasmic vesicle membrane. The catalysed reaction is 2 iodide + L-tyrosine + 2 NADP(+) = 3,5-diiodo-L-tyrosine + 2 NADPH + H(+). It carries out the reaction iodide + L-tyrosine + NADP(+) = 3-iodo-L-tyrosine + NADPH. It catalyses the reaction 3-iodo-L-tyrosine + iodide + NADP(+) = 3,5-diiodo-L-tyrosine + NADPH + H(+). The enzyme catalyses L-tyrosine + chloride + NADP(+) = 3-chloro-L-tyrosine + NADPH. The catalysed reaction is bromide + L-tyrosine + NADP(+) = 3-bromo-L-tyrosine + NADPH. Functionally, catalyzes the dehalogenation of halotyrosines such as 3-bromo-L-tyrosine, 3-chloro-L-tyrosine, 3-iodo-L-tyrosine and 3,5-diiodo-L-tyrosine. During thyroid hormone biosynthesis, facilitates iodide salvage by catalysing the oxidative NADPH-dependent deiodination of the halogenated by-products of thyroid hormone production, monoiodotyrosine (L-MIT) and diiodotyrosine (L-DIT). The scavanged iodide can then reenter the hormone-producing pathways. Acts more efficiently on 3-iodo-L-tyrosine than 3,5-diiodo-L-tyrosine. The chain is Iodotyrosine deiodinase 1 from Homo sapiens (Human).